The following is a 157-amino-acid chain: Large ribosomal subunit protein uL15 (157 aa).

It belongs to the universal ribosomal protein uL15 family. Part of the 50S ribosomal subunit.

Functionally, binds to the 23S rRNA. The sequence is that of Large ribosomal subunit protein uL15 from Ehrlichia ruminantium (strain Welgevonden).